The primary structure comprises 94 residues: Integration host factor subunit beta (94 aa).

This sequence belongs to the bacterial histone-like protein family. In terms of assembly, heterodimer of an alpha and a beta chain.

Functionally, this protein is one of the two subunits of integration host factor, a specific DNA-binding protein that functions in genetic recombination as well as in transcriptional and translational control. This chain is Integration host factor subunit beta, found in Ruegeria pomeroyi (strain ATCC 700808 / DSM 15171 / DSS-3) (Silicibacter pomeroyi).